The chain runs to 363 residues: UDP-N-acetylglucosamine--N-acetylmuramyl-(pentapeptide) pyrophosphoryl-undecaprenol N-acetylglucosamine transferase (363 aa).

Residues 14 to 16 (TGG), R171, S200, and Q290 each bind UDP-N-acetyl-alpha-D-glucosamine.

Belongs to the glycosyltransferase 28 family. MurG subfamily.

Its subcellular location is the cell inner membrane. The enzyme catalyses di-trans,octa-cis-undecaprenyl diphospho-N-acetyl-alpha-D-muramoyl-L-alanyl-D-glutamyl-meso-2,6-diaminopimeloyl-D-alanyl-D-alanine + UDP-N-acetyl-alpha-D-glucosamine = di-trans,octa-cis-undecaprenyl diphospho-[N-acetyl-alpha-D-glucosaminyl-(1-&gt;4)]-N-acetyl-alpha-D-muramoyl-L-alanyl-D-glutamyl-meso-2,6-diaminopimeloyl-D-alanyl-D-alanine + UDP + H(+). Its pathway is cell wall biogenesis; peptidoglycan biosynthesis. Cell wall formation. Catalyzes the transfer of a GlcNAc subunit on undecaprenyl-pyrophosphoryl-MurNAc-pentapeptide (lipid intermediate I) to form undecaprenyl-pyrophosphoryl-MurNAc-(pentapeptide)GlcNAc (lipid intermediate II). The polypeptide is UDP-N-acetylglucosamine--N-acetylmuramyl-(pentapeptide) pyrophosphoryl-undecaprenol N-acetylglucosamine transferase (Borreliella burgdorferi (strain ATCC 35210 / DSM 4680 / CIP 102532 / B31) (Borrelia burgdorferi)).